The following is a 1081-amino-acid chain: MPPKMRSSQENVAVSSDATIQASSASSPLQDAMAAVTSLFPLTSPFPDPAKDDTLIPAADILLEQELLRNPDNFRSWSSYIDHIINTNVVKRPPPDVSLTTYQAALLGPLASSTQRTALRRLTSIYERALAQFPTRYSLWRDYLQNRSRFVLGDPKGGSDAKRKRDLQAAREKLDFGPTLIDSVEDEDFGSAYRGGLDGTVGWQEWKSLAALYERALMWLPTMPRLWLSYLSMFIHPQCPPILSFTHARRTFDRALRTLPGSLHLRVWKVYLKWAERRGGETCLRVWRRYLRVDPSLTERYVSILLAQREDQDEPEGEEEEAEDDAQSDRSRKQSGSKALEASKLLLGLARSAMDGTYVSPEGKSPFQLFVEWLELTEKYPEEIGLDPEEEKKYLQHSVALTSDNGMTNARRAPRHIQGKGTAAREIAKASSSKHPETDALDPTRLNVTAIIQKDGLDKFSDQSGRLWTGLATYWIKRGEFDVARDTFEAGIQTVKTVRDFTQIFDAYAETSENVIAFMMDELTEEGGDEEADAEDQEETREDKEAELDRRMQEFEELIERRPLLVNDVLLRRNPDDVQEWEKRVMLYGDNDEKIIETYREAIQKINPRKATPNFHQLFLNFAQFYEYGGSAGLAKRMAEGVEGQEEEEQAEQVEGDLESARKIFEKAITIPFRRVDDLAEIWCEWAEMELRHSNYDEAIRTMARSVAPPRNTKGIQYHDDTLPPQTRLFKSLKLWSFYVDLEESLGDVESTKRVYEKMLELKIASAQIIINYAAFLEDNKYFEESFKVFERGVELFSYPVAFEIWNVYLSKFVKRYGGAKLERARDLFEQALDKCPARFCKPLMLMYGQLEEEHGLVKRAMKIYERATRAVSTDDRFDMYVFYIAKAAATFGLAATRPIYERAIESLPDRQTAEMCLRFAALERKLGEIDRARVIYAHASQFCDPRTQTDFWKEWNQFEIETGSEDTFREMLRIKRSVQAQFNTDVSYIAASALASAQQNQAQRGAQGSSNGHVREDDVDASDPMARVEAASRSAGARQTAFVAASTAASGARSADTTIGDVAKNDEVVGGDDQDDQDLL.

A disordered region spans residues 1-27; that stretch reads MPPKMRSSQENVAVSSDATIQASSASS. 4 HAT repeats span residues 54–86, 117–149, 204–236, and 243–277; these read TLIP…HIIN, TALR…NRSR, QEWK…MFIH, and LSFT…WAER. A disordered region spans residues 308-337; it reads QREDQDEPEGEEEEAEDDAQSDRSRKQSGS. The segment covering 311 to 326 has biased composition (acidic residues); it reads DQDEPEGEEEEAEDDA. 2 HAT repeats span residues 444–477 and 479–514; these read TRLN…YWIK and GEFD…TSEN. The segment covering 526 to 540 has biased composition (acidic residues); it reads EGGDEEADAEDQEET. Residues 526–546 are disordered; the sequence is EGGDEEADAEDQEETREDKEA. HAT repeat units lie at residues 656–692, 711–745, 747–779, 781–815, 820–854, 856–887, 892–926, and 928–962; these read GDLE…MELR, RNTK…LEES, GDVE…FLED, KYFE…KFVK, AKLE…LEEE, GLVK…YIAK, FGLA…LERK, and GEID…FEIE. 2 stretches are compositionally biased toward low complexity: residues 1001–1011 and 1047–1059; these read NQAQRGAQGSS and STAA…ADTT. Disordered regions lie at residues 1001 to 1022 and 1047 to 1081; these read NQAQ…DVDA and STAA…QDLL. Residues 1070–1081 are compositionally biased toward acidic residues; sequence VGGDDQDDQDLL.

This sequence belongs to the crooked-neck family. In terms of assembly, associated with the spliceosome.

The protein localises to the nucleus. Functionally, involved in pre-mRNA splicing and cell cycle progression. The chain is Pre-mRNA-splicing factor SYF1 (SYF1) from Mycosarcoma maydis (Corn smut fungus).